The chain runs to 121 residues: Large ribosomal subunit protein uL14 (121 aa).

It belongs to the universal ribosomal protein uL14 family. As to quaternary structure, part of the 50S ribosomal subunit. Forms a cluster with proteins L3 and L19. In the 70S ribosome, L14 and L19 interact and together make contacts with the 16S rRNA in bridges B5 and B8.

Binds to 23S rRNA. Forms part of two intersubunit bridges in the 70S ribosome. In Bacteroides fragilis (strain ATCC 25285 / DSM 2151 / CCUG 4856 / JCM 11019 / LMG 10263 / NCTC 9343 / Onslow / VPI 2553 / EN-2), this protein is Large ribosomal subunit protein uL14.